The chain runs to 479 residues: Ubiquinone biosynthesis monooxygenase COQ6, mitochondrial (479 aa).

Belongs to the UbiH/COQ6 family. In terms of assembly, component of a multi-subunit COQ enzyme complex, composed of at least COQ3, COQ4, COQ5, COQ6, COQ7 and COQ9. FAD is required as a cofactor.

The protein localises to the mitochondrion inner membrane. The catalysed reaction is 4-hydroxy-3-(all-trans-decaprenyl)benzoate + 2 reduced [2Fe-2S]-[ferredoxin] + O2 + 2 H(+) = 3,4-dihydroxy-5-(all-trans-decaprenyl)benzoate + 2 oxidized [2Fe-2S]-[ferredoxin] + H2O. It catalyses the reaction 2-methoxy-6-(all-trans-decaprenyl)phenol + 2 reduced [2Fe-2S]-[ferredoxin] + O2 + 2 H(+) = 2-methoxy-6-(all-trans-decaprenyl)benzene-1,4-diol + 2 oxidized [2Fe-2S]-[ferredoxin] + H2O. It participates in cofactor biosynthesis; ubiquinone biosynthesis. Functionally, FAD-dependent monooxygenase required for two non-consecutive steps during ubiquinone biosynthesis. Required for the C5-ring hydroxylation during ubiquinone biosynthesis by catalyzing the hydroxylation of 4-hydroxy-3-(all-trans-decaprenyl)benzoic acid to 3,4-dihydroxy-5-(all-trans-decaprenyl)benzoic acid. Also acts downstream of COQ4, for the C1-hydroxylation during ubiquinone biosynthesis by catalyzing the hydroxylation of 2-methoxy-6-(all-trans-decaprenyl)phenol to 2-methoxy-6-(all-trans-decaprenyl)benzene-1,4-diol. The electrons required for the hydroxylation reaction are funneled indirectly to coq6 from NADPH via a ferredoxin/ferredoxin reductase system. This Schizosaccharomyces pombe (strain 972 / ATCC 24843) (Fission yeast) protein is Ubiquinone biosynthesis monooxygenase COQ6, mitochondrial.